A 343-amino-acid chain; its full sequence is Isopentenyl-diphosphate delta-isomerase (343 aa).

Residue R9–K10 coordinates substrate. Residues S67, A68 to T70, S98, and N127 contribute to the FMN site. S98–R100 contacts substrate. Q162 lines the substrate pocket. E163 is a Mg(2+) binding site. FMN-binding positions include K194, T224, G273 to R275, and A294 to A295.

It belongs to the IPP isomerase type 2 family. In terms of assembly, homooctamer. Dimer of tetramers. It depends on FMN as a cofactor. The cofactor is NADPH. Mg(2+) serves as cofactor.

The protein resides in the cytoplasm. It catalyses the reaction isopentenyl diphosphate = dimethylallyl diphosphate. Functionally, involved in the biosynthesis of isoprenoids. Catalyzes the 1,3-allylic rearrangement of the homoallylic substrate isopentenyl (IPP) to its allylic isomer, dimethylallyl diphosphate (DMAPP). The chain is Isopentenyl-diphosphate delta-isomerase from Xanthobacter autotrophicus (strain ATCC BAA-1158 / Py2).